Reading from the N-terminus, the 416-residue chain is Serine carboxypeptidase S10 family member 1 (416 aa).

A signal peptide spans 1 to 20 (MMKLLFIIISIIFVINVSNS). 2 N-linked (GlcNAc...) asparagine glycosylation sites follow: N33 and N84. S156 is a catalytic residue. N-linked (GlcNAc...) asparagine glycans are attached at residues N235, N273, and N295. Residue D338 is part of the active site. Residue N385 is glycosylated (N-linked (GlcNAc...) asparagine). Residue H396 is part of the active site.

This sequence belongs to the peptidase S10 family.

It localises to the secreted. Functionally, probable carboxypeptidase. This Dictyostelium discoideum (Social amoeba) protein is Serine carboxypeptidase S10 family member 1.